A 73-amino-acid chain; its full sequence is Homeodomain-only protein (73 aa).

The homeobox; degenerate DNA-binding region spans 3-62; it reads TETASGPTEDQVEILEYNFNKVNKHPDPTTLCLIAAEAGLSEEETQKWFKQRLAQWRRSE.

As to quaternary structure, interacts with serum response factor (SRF). Component of a large complex containing histone deacetylases such as HDAC2. Interacts with the acetylated forms of HSPA1A and HSPA1B. Interacts with HSPA8.

The protein resides in the nucleus. The protein localises to the cytoplasm. In terms of biological role, atypical homeodomain protein which does not bind DNA and is required to modulate cardiac growth and development. Acts via its interaction with SRF, thereby modulating the expression of SRF-dependent cardiac-specific genes and cardiac development. Prevents SRF-dependent transcription either by inhibiting SRF binding to DNA or by recruiting histone deacetylase (HDAC) proteins that prevent transcription by SRF. Overexpression causes cardiac hypertrophy. Acts as a co-chaperone for HSPA1A and HSPA1B chaperone proteins and assists in chaperone-mediated protein refolding. The protein is Homeodomain-only protein (HOPX) of Bos taurus (Bovine).